Reading from the N-terminus, the 459-residue chain is ADP-specific phosphofructokinase (459 aa).

Positions M1–R457 constitute an ADPK domain. Positions 268, 298, and 441 each coordinate Mg(2+). D441 serves as the catalytic Proton acceptor.

This sequence belongs to the carbohydrate kinase PfkC family. Mg(2+) is required as a cofactor.

Its subcellular location is the cytoplasm. The catalysed reaction is beta-D-fructose 6-phosphate + ADP = beta-D-fructose 1,6-bisphosphate + AMP + H(+). The protein operates within carbohydrate degradation; glycolysis. Functionally, catalyzes the phosphorylation of fructose 6-phosphate to fructose 1,6-bisphosphate using ADP as the phosphate donor. The protein is ADP-specific phosphofructokinase of Thermococcus litoralis.